Here is a 214-residue protein sequence, read N- to C-terminus: Putative 3-methyladenine DNA glycosylase (214 aa).

The protein belongs to the DNA glycosylase MPG family.

This Gloeobacter violaceus (strain ATCC 29082 / PCC 7421) protein is Putative 3-methyladenine DNA glycosylase.